Consider the following 453-residue polypeptide: Omega-3 fatty acid desaturase, chloroplastic (453 aa).

The short motif at 171-175 (HDCGH) is the Histidine box-1 element. The Histidine box-2 signature appears at 207-211 (HRTHH). The Histidine box-3 signature appears at 374–378 (HVIHH).

The protein belongs to the fatty acid desaturase type 1 family.

The protein localises to the plastid. It is found in the chloroplast membrane. Its pathway is lipid metabolism; polyunsaturated fatty acid biosynthesis. Its function is as follows. Chloroplast omega-3 fatty acid desaturase introduces the third double bond in the biosynthesis of 16:3 and 18:3 fatty acids, important constituents of plant membranes. It is thought to use ferredoxin as an electron donor and to act on fatty acids esterified to galactolipids, sulfolipids and phosphatidylglycerol. In Glycine max (Soybean), this protein is Omega-3 fatty acid desaturase, chloroplastic (FAD7).